A 135-amino-acid polypeptide reads, in one-letter code: Small ribosomal subunit protein uS11 (135 aa).

Residues 1 to 26 are disordered; that stretch reads MPPKSRTAGGARKTRRKEKKNVSHGH. Residues 12 to 23 show a composition bias toward basic residues; that stretch reads RKTRRKEKKNVS.

The protein belongs to the universal ribosomal protein uS11 family. In terms of assembly, part of the 30S ribosomal subunit. Interacts with proteins S7 and S18. Binds to IF-3.

Functionally, located on the platform of the 30S subunit, it bridges several disparate RNA helices of the 16S rRNA. Forms part of the Shine-Dalgarno cleft in the 70S ribosome. This is Small ribosomal subunit protein uS11 from Beutenbergia cavernae (strain ATCC BAA-8 / DSM 12333 / CCUG 43141 / JCM 11478 / NBRC 16432 / NCIMB 13614 / HKI 0122).